The following is a 274-amino-acid chain: Large ribosomal subunit protein uL2 (274 aa).

Disordered regions lie at residues 37 to 59 (KAKN…GGHK) and 222 to 262 (GAAM…RTNK). Residues 50–59 (TTRHKGGGHK) show a composition bias toward basic residues.

The protein belongs to the universal ribosomal protein uL2 family. As to quaternary structure, part of the 50S ribosomal subunit. Forms a bridge to the 30S subunit in the 70S ribosome.

In terms of biological role, one of the primary rRNA binding proteins. Required for association of the 30S and 50S subunits to form the 70S ribosome, for tRNA binding and peptide bond formation. It has been suggested to have peptidyltransferase activity; this is somewhat controversial. Makes several contacts with the 16S rRNA in the 70S ribosome. The sequence is that of Large ribosomal subunit protein uL2 from Alcanivorax borkumensis (strain ATCC 700651 / DSM 11573 / NCIMB 13689 / SK2).